Consider the following 239-residue polypeptide: SH3 domain-binding glutamic acid-rich protein (239 aa).

The SH3-binding signature appears at 124–130; it reads NGIPLPP. A disordered region spans residues 159 to 239; it reads GLAPPPDSKG…GEEPGEDEDS (81 aa). Positions 167–185 are enriched in basic and acidic residues; that stretch reads KGSEKAEEGGETEAQKEGS. A compositionally biased stretch (acidic residues) spans 198-239; sequence NEEEGETATEETEEIAMEGAEGEAEEEEETAEGEEPGEDEDS.

It belongs to the SH3BGR family. As to expression, expressed in heart and skeletal muscle.

This is SH3 domain-binding glutamic acid-rich protein (SH3BGR) from Homo sapiens (Human).